Reading from the N-terminus, the 298-residue chain is NADH-cytochrome b5 reductase 2 (298 aa).

The helical transmembrane segment at Phe-15–Ala-38 threads the bilayer. The FAD-binding FR-type domain occupies Asp-49–Glu-153. Gln-156–Leu-191 contacts FAD.

Belongs to the flavoprotein pyridine nucleotide cytochrome reductase family. Requires FAD as cofactor.

The protein localises to the mitochondrion outer membrane. It catalyses the reaction 2 Fe(III)-[cytochrome b5] + NADH = 2 Fe(II)-[cytochrome b5] + NAD(+) + H(+). Its function is as follows. May mediate the reduction of outer membrane cytochrome b5. This Scheffersomyces stipitis (strain ATCC 58785 / CBS 6054 / NBRC 10063 / NRRL Y-11545) (Yeast) protein is NADH-cytochrome b5 reductase 2 (MCR1).